Reading from the N-terminus, the 371-residue chain is Solute carrier family 35 member F6 (371 aa).

An N-terminal signal peptide occupies residues Met1–Gly18. 2 helical membrane-spanning segments follow: residues Phe48–Leu68 and Leu89–Leu109. The 57-residue stretch at Leu104 to Leu160 folds into the EamA domain. The N-linked (GlcNAc...) asparagine glycan is linked to Asn110. 7 consecutive transmembrane segments (helical) span residues Phe117–Gly137, Leu140–Leu160, Val176–Leu196, Gly216–Gly236, Leu261–Ile281, Leu295–Trp312, and Ala317–Leu336. Residues Glu352–Ser371 form a disordered region. Thr365 carries the phosphothreonine modification.

The protein belongs to the SLC35F solute transporter family. As to quaternary structure, interacts with SLC25A5. As to expression, expressed in pancreatic ductal adenocarcinoma (PDAC) (at protein level). Strongly expressed in prostate and thyroid. Weakly expressed in lung, heart, liver and kidney.

Its subcellular location is the mitochondrion. The protein localises to the lysosome membrane. Its function is as follows. Involved in the maintenance of mitochondrial membrane potential in pancreatic ductal adenocarcinoma (PDAC) cells. Promotes pancreatic ductal adenocarcinoma (PDAC) cell growth. May play a role as a nucleotide-sugar transporter. The protein is Solute carrier family 35 member F6 (SLC35F6) of Homo sapiens (Human).